The chain runs to 295 residues: Sulfotransferase 1E1 (295 aa).

Residue 48–53 (KSGTTW) coordinates 3'-phosphoadenylyl sulfate. 106–108 (KTH) is a substrate binding site. His-108 serves as the catalytic Proton acceptor. The 3'-phosphoadenylyl sulfate site is built by Arg-130 and Ser-138. At Ser-156 the chain carries Phosphoserine. 3'-phosphoadenylyl sulfate contacts are provided by residues Tyr-193, 227–232 (TSFQEM), and 257–259 (RKG).

This sequence belongs to the sulfotransferase 1 family. In terms of assembly, homodimer. As to expression, testis and at very low level in the placenta.

It localises to the cytoplasm. The protein resides in the cytosol. The catalysed reaction is estrone + 3'-phosphoadenylyl sulfate = estrone 3-sulfate + adenosine 3',5'-bisphosphate + H(+). It catalyses the reaction 17beta-estradiol + 3'-phosphoadenylyl sulfate = 17beta-estradiol 3-sulfate + adenosine 3',5'-bisphosphate + H(+). It carries out the reaction (24S)-hydroxycholesterol + 3'-phosphoadenylyl sulfate = (24S)-hydroxycholesterol 3-sulfate + adenosine 3',5'-bisphosphate + H(+). The enzyme catalyses 3beta-hydroxyandrost-5-en-17-one + 3'-phosphoadenylyl sulfate = dehydroepiandrosterone 3-sulfate + adenosine 3',5'-bisphosphate + H(+). The catalysed reaction is 4-ethylphenol + 3'-phosphoadenylyl sulfate = 4-ethylphenyl sulfate + adenosine 3',5'-bisphosphate + H(+). With respect to regulation, inhibited by estradiol. In terms of biological role, sulfotransferase that utilizes 3'-phospho-5'-adenylyl sulfate (PAPS) as sulfonate donor to catalyze the sulfate conjugation of estradiol and estrone. Is a key enzyme in estrogen homeostasis, the sulfation of estrogens leads to their inactivation. Also sulfates dehydroepiandrosterone, pregnenolone, (24S)-hydroxycholesterol and xenobiotic compounds like ethinylestradiol, equalenin, diethyl stilbesterol and 1-naphthol at significantly lower efficiency. Does not sulfonate cortisol, testosterone and dopamine. May play a role in gut microbiota-host metabolic interaction. O-sulfonates 4-ethylphenol (4-EP), a dietary tyrosine-derived metabolite produced by gut bacteria. The product 4-EPS crosses the blood-brain barrier and may negatively regulate oligodendrocyte maturation and myelination, affecting the functional connectivity of different brain regions associated with the limbic system. The chain is Sulfotransferase 1E1 (Sult1e1) from Mus musculus (Mouse).